Here is a 327-residue protein sequence, read N- to C-terminus: Undecaprenyl-phosphate 4-deoxy-4-formamido-L-arabinose transferase (327 aa).

The next 2 helical transmembrane spans lie at 236-256 (LSLV…LLVV) and 270-290 (VFTL…GMGL).

It belongs to the glycosyltransferase 2 family.

The protein resides in the cell inner membrane. The enzyme catalyses UDP-4-deoxy-4-formamido-beta-L-arabinose + di-trans,octa-cis-undecaprenyl phosphate = 4-deoxy-4-formamido-alpha-L-arabinopyranosyl di-trans,octa-cis-undecaprenyl phosphate + UDP. Its pathway is glycolipid biosynthesis; 4-amino-4-deoxy-alpha-L-arabinose undecaprenyl phosphate biosynthesis; 4-amino-4-deoxy-alpha-L-arabinose undecaprenyl phosphate from UDP-4-deoxy-4-formamido-beta-L-arabinose and undecaprenyl phosphate: step 1/2. The protein operates within bacterial outer membrane biogenesis; lipopolysaccharide biosynthesis. In terms of biological role, catalyzes the transfer of 4-deoxy-4-formamido-L-arabinose from UDP to undecaprenyl phosphate. The modified arabinose is attached to lipid A and is required for resistance to polymyxin and cationic antimicrobial peptides. In Yersinia enterocolitica serotype O:8 / biotype 1B (strain NCTC 13174 / 8081), this protein is Undecaprenyl-phosphate 4-deoxy-4-formamido-L-arabinose transferase.